We begin with the raw amino-acid sequence, 175 residues long: Protein OPG036 (175 aa).

Belongs to the poxviridae OPG036 family.

It localises to the host nucleus. In terms of biological role, plays a role in the inhibition of host innate immune response. Within the host nucleus, inhibits activation of interferon-beta promoter by inhibiting IRF3 activation. In Bos taurus (Bovine), this protein is Protein OPG036 (OPG036).